Reading from the N-terminus, the 1274-residue chain is MPEPGKRPVSAFTKKPRSVEVTAGSAAVFEAETERSGLKVQWQRDGSDIAANDKYGLAAEGKRHTLTVRDVGPDDQGSYAVIAGSSKVKFDLKVTEPAPPEKAESAVAPTSMEAPETPKEVPALATQLEGNVSSPEGSVSVTQDGSVAGSQGAPDDPIGLFLMRPQDGEVTVGGSIVFSARVAGASLLKPPVVKWFKGKWVDLSSKVGQHLQLHDSYDRASKVYLFELHITDAQATSAGGYRCEVSTKDKFDSCNFNLTVHEAIGSGDLDLRSAFRRTSLAGTGRRTSDSHEDAGTLDFSSLLKKSSFRRDSKLEAPAEEDVWEILRQAPPSEYERIAFQHGVTDLRGMLKRLKGMKHDEKKSTAFQKKLEPAYQVNKGHKIRLTVELADPDAEVKWLKNGQEIQMSGRYIFESIGAKRTLTISQCSLADDAAYQCVVGGEKCSTELFVKEPPVLITRSLEDQLVMVGQRVEFECEVSEEGAQVKWLKDGVELTREETFKYRFKKDGRKHHLIINEATLEDAGHYAVRTSGGQALAELIVQEKKLEVYQSIADLAVGAKDQAVFKCEVSDENVRGVWLKNGKELVPDNRIKVSHIGRVHKLTIDDVTPADEADYSFVPEGFACNLSAKLHFMEVKIDFVPRQEPPKIHLDCPGSTPDTIVVVAGNKLRLDVPISGDPAPTVIWQKTITQGKKASAGPPPGAPEDAGADEEWVFDKKLLCETEGRVRVETTKDRSVFTVEGAEKEDEGVYTVTVKNPVGEDQVNLTVKVIDVPDAPAAPKISNVGEDSCIVQWEPPAYDGGQPVLGYILERKKKKSYRWMRLNFDLLRELSHEARRMIEGVAYEMRVYAVNAVGMSRPSPASQPFMPIGPPGEPTHLTVEDVSDTTVSLKWRPPERVGAGGLDGYSVEYCQEGCSEWVTALQGLTERTSLLVKDLPTGARLLFRVRAHNVAGPGGPIITKEPVTVQEILQRPRLQLPRHLRQTIQKKVGEPVNLLIPFQGKPRPQVTWTKEGQPLAGEEVSIRNSPTDTILFIRAAHRTHSGTYQVTVRIENMEDKATLVLQIVDKPSPPLDIRVVETWGFSVALEWKPPQDDGNTEIWGYTVQKADKKTMEWFTVLEHYRQTHCVVSELIIGNGYYFRVFSHNMVGSSDRAAATKEPIFIPRPGITYEPPKYKALDFSEAPSFTQPLTNRSIIAGYNAILCCAVRGSPKPKISWFKNGLDLGEDARFRMFCKQGVLTLEIRKPCPYDGGVYVCRATNLQGEAQCECRLEVRVPQ.

Methionine 1 bears the N-acetylmethionine mark. The region spanning 8–95 (PVSAFTKKPR…SKVKFDLKVT (88 aa)) is the Ig-like C2-type 1 domain. The residue at position 47 (serine 47) is a Phosphoserine. The segment covering 95–104 (TEPAPPEKAE) has biased composition (basic and acidic residues). Residues 95–153 (TEPAPPEKAESAVAPTSMEAPETPKEVPALATQLEGNVSSPEGSVSVTQDGSVAGSQGA) form a disordered region. The residue at position 117 (threonine 117) is a Phosphothreonine. A compositionally biased stretch (polar residues) spans 128-149 (LEGNVSSPEGSVSVTQDGSVAG). The Ig-like C2-type 2 domain maps to 157–259 (PIGLFLMRPQ…KFDSCNFNLT (103 aa)). Zn(2+)-binding residues include glutamine 212, histidine 214, glutamate 227, and histidine 229. At serine 279 the chain carries Phosphoserine. Residue threonine 287 is modified to Phosphothreonine; by PKA and PKC. At serine 288 the chain carries Phosphoserine. Serine 307 bears the Phosphoserine; by PKA mark. Phosphoserine is present on residues serine 312 and serine 427. 2 consecutive Ig-like C2-type domains span residues 361-452 (KKST…VKEP) and 452-546 (PPVL…KKLE). Residues cysteine 436 and cysteine 443 are joined by a disulfide bond. Phosphoserine occurs at positions 459 and 550. Residue threonine 607 is modified to Phosphothreonine. In terms of domain architecture, Ig-like C2-type 5 spans 645-765 (PKIHLDCPGS…PVGEDQVNLT (121 aa)). 2 consecutive Fibronectin type-III domains span residues 774-870 (APAA…IGPP) and 872-967 (EPTH…VQEI). The region spanning 971 to 1059 (PRLQLPRHLR…ENMEDKATLV (89 aa)) is the Ig-like C2-type 6 domain. Positions 1068-1163 (PPLDIRVVET…TKEPIFIPRP (96 aa)) constitute a Fibronectin type-III 3 domain. The 89-residue stretch at 1181-1269 (PSFTQPLTNR…GEAQCECRLE (89 aa)) folds into the Ig-like C2-type 7 domain. Arginine 1241 is modified (omega-N-methylarginine).

This sequence belongs to the immunoglobulin superfamily. MyBP family. In terms of processing, substrate for phosphorylation by PKA and PKC. Reversible phosphorylation appears to modulate contraction. Post-translationally, polyubiquitinated.

Functionally, thick filament-associated protein located in the crossbridge region of vertebrate striated muscle a bands. In vitro it binds MHC, F-actin and native thin filaments, and modifies the activity of actin-activated myosin ATPase. It may modulate muscle contraction or may play a more structural role. This chain is Myosin-binding protein C, cardiac-type (Mybpc3), found in Rattus norvegicus (Rat).